The following is a 1940-amino-acid chain: Myosin-1B (1940 aa).

The Myosin N-terminal SH3-like domain occupies 33–82 (DAKSSVFVVHAKESYVKSTIQSKESGKVTVKTEGGETLTVKEDQIFSMNP). Residues 86 to 783 (DKIEDMAMMT…LLGLLEEMRD (698 aa)) enclose the Myosin motor domain. Lysine 130 is modified (N6,N6,N6-trimethyllysine). 179–186 (GESGAGKT) is an ATP binding site. 2 actin-binding regions span residues 660–682 (LNKLMSNLRSTHPHFVRCLIPNE) and 762–776 (KFGHTKVFFKAGLLG). In terms of domain architecture, IQ spans 786–815 (LAQLITRTQARCRGFLMRVEFKKMMERRES). Positions 844-1940 (LLKSAESEKE…EIGKKAESEE (1097 aa)) form a coiled coil. Residues 1912–1940 (EERADIAESQVNKLRAKSREIGKKAESEE) are disordered. Positions 1928 to 1940 (KSREIGKKAESEE) are enriched in basic and acidic residues.

This sequence belongs to the TRAFAC class myosin-kinesin ATPase superfamily. Myosin family. Muscle myosin is a hexameric protein that consists of 2 heavy chain subunits (MHC), 2 alkali light chain subunits (MLC) and 2 regulatory light chain subunits (MLC-2).

It localises to the cytoplasm. The protein resides in the myofibril. In terms of biological role, muscle contraction. The protein is Myosin-1B (MYH1B) of Gallus gallus (Chicken).